Consider the following 372-residue polypeptide: F-box protein AFR (372 aa).

Residues 1-15 are compositionally biased toward polar residues; that stretch reads MAEQETTSNINTIND. Residues 1–27 form a disordered region; that stretch reads MAEQETTSNINTINDQAEEETRTKSQP. One can recognise an F-box domain in the interval 29–74; it reads ISGLPNDIAELCLLRLPYPYHALYRSVSSSWNKTITNPRFLFSKQS. Kelch repeat units follow at residues 80 to 126, 135 to 178, 179 to 227, 229 to 276, and 279 to 325; these read PYLF…HALS, KLFV…NVNG, KIMA…VIGK, MCVT…IRDR, and VISE…DRVF.

In terms of assembly, part of a SCF (ASK-cullin-F-box) protein ligase complex. Interacts with SKP1A.

It participates in protein modification; protein ubiquitination. In terms of biological role, component of SCF (ASK-cullin-F-box) E3 ubiquitin ligase complexes, which may mediate the ubiquitination and subsequent proteasomal degradation of target proteins. Part of the phyA-mediated signaling transduction pathway leading to the regulation of gene expression and hypocotyls elongation in response to red and far-red light exposure. This chain is F-box protein AFR (AFR), found in Arabidopsis thaliana (Mouse-ear cress).